Reading from the N-terminus, the 436-residue chain is Probable 4-aminobutyrate aminotransferase (436 aa).

At Lys-281 the chain carries N6-(pyridoxal phosphate)lysine.

The protein belongs to the class-III pyridoxal-phosphate-dependent aminotransferase family. It depends on pyridoxal 5'-phosphate as a cofactor.

The catalysed reaction is 4-aminobutanoate + 2-oxoglutarate = succinate semialdehyde + L-glutamate. It carries out the reaction (S)-3-amino-2-methylpropanoate + 2-oxoglutarate = 2-methyl-3-oxopropanoate + L-glutamate. It participates in amino-acid degradation; 4-aminobutanoate degradation. In Bacillus subtilis (strain 168), this protein is Probable 4-aminobutyrate aminotransferase (gabT).